Here is a 383-residue protein sequence, read N- to C-terminus: Acetylornithine deacetylase (383 aa).

His-80 provides a ligand contact to Zn(2+). Residue Asp-82 is part of the active site. Asp-112 contributes to the Zn(2+) binding site. Glu-144 is an active-site residue. Glu-145, Glu-169, and His-355 together coordinate Zn(2+).

This sequence belongs to the peptidase M20A family. ArgE subfamily. In terms of assembly, homodimer. The cofactor is Zn(2+). It depends on Co(2+) as a cofactor. Requires glutathione as cofactor.

It localises to the cytoplasm. The catalysed reaction is N(2)-acetyl-L-ornithine + H2O = L-ornithine + acetate. Its pathway is amino-acid biosynthesis; L-arginine biosynthesis; L-ornithine from N(2)-acetyl-L-ornithine (linear): step 1/1. Its function is as follows. Catalyzes the hydrolysis of the amide bond of N(2)-acetylated L-amino acids. Cleaves the acetyl group from N-acetyl-L-ornithine to form L-ornithine, an intermediate in L-arginine biosynthesis pathway, and a branchpoint in the synthesis of polyamines. The chain is Acetylornithine deacetylase from Escherichia coli (strain SMS-3-5 / SECEC).